The chain runs to 1057 residues: Protein transport protein Sec16B (1057 aa).

Positions 1–15 (MELWVPQTQGRTTGP) are enriched in polar residues. Residues 1–86 (MELWVPQTQG…VSGADYLKGS (86 aa)) are disordered. Positions 45 to 63 (QDTHKNSKPQQDPRDDHQQ) are enriched in basic and acidic residues. 4 positions are modified to phosphoserine: Ser-70, Ser-137, Ser-161, and Ser-185. The segment at 185-220 (SAFGLEQPGEFFPESGAQKQKPSLTSKSNLLQQHES) is disordered. The span at 201-213 (AQKQKPSLTSKSN) shows a compositional bias: polar residues. Ser-245 bears the Phosphoserine mark. A central conserved domain (CCD); required for localization to endoplasmic reticulum exit sites region spans residues 263–708 (APMRFYVPHV…KHKELEQTRT (446 aa)). Residues 704-715 (EQTRTGDLRDPD) are compositionally biased toward basic and acidic residues. Disordered stretches follow at residues 704-778 (EQTR…TYSE) and 849-1057 (AVIS…SQPC). Residues 737–764 (GQQNYSEDSEYSSALWPTSEQTSLTNPT) show a composition bias toward polar residues. Thr-856 is modified (phosphothreonine). A phosphoserine mark is found at Ser-866, Ser-869, Ser-872, and Ser-881. The segment covering 883–903 (GADKPPHPDASQKEKLRDGKN) has biased composition (basic and acidic residues). Over residues 906–926 (SSGFGWFSWFRSKPASSVSTS) the composition is skewed to low complexity. Acidic residues predominate over residues 927 to 938 (GDEDSVDSSDSE). A compositionally biased stretch (gly residues) spans 990–999 (EGVGIGGFSG). Over residues 1028 to 1043 (NPSQVPQLPTASSLNR) the composition is skewed to polar residues.

It belongs to the SEC16 family. As to quaternary structure, SEC16A and SEC16B are each present in multiple copies in a heteromeric complex. Interacts with TFG. Interacts with SEC13. In terms of tissue distribution, liver, kidney, heart, spleen and brain.

Its subcellular location is the endoplasmic reticulum membrane. It is found in the golgi apparatus membrane. In terms of biological role, plays a role in the organization of the endoplasmic reticulum exit sites (ERES), also known as transitional endoplasmic reticulum (tER). Required for secretory cargo traffic from the endoplasmic reticulum to the Golgi apparatus. Involved in peroxisome biogenesis. Regulates the transport of peroxisomal biogenesis factors PEX3 and PEX16 from the ER to peroxisomes. The sequence is that of Protein transport protein Sec16B (Sec16b) from Rattus norvegicus (Rat).